Reading from the N-terminus, the 257-residue chain is Hydroxyacylglutathione hydrolase (257 aa).

Residues histidine 56, histidine 58, aspartate 60, histidine 61, histidine 112, aspartate 131, and histidine 169 each coordinate Zn(2+).

The protein belongs to the metallo-beta-lactamase superfamily. Glyoxalase II family. Monomer. The cofactor is Zn(2+).

The enzyme catalyses an S-(2-hydroxyacyl)glutathione + H2O = a 2-hydroxy carboxylate + glutathione + H(+). It participates in secondary metabolite metabolism; methylglyoxal degradation; (R)-lactate from methylglyoxal: step 2/2. In terms of biological role, thiolesterase that catalyzes the hydrolysis of S-D-lactoyl-glutathione to form glutathione and D-lactic acid. This Ectopseudomonas mendocina (strain ymp) (Pseudomonas mendocina) protein is Hydroxyacylglutathione hydrolase.